A 240-amino-acid polypeptide reads, in one-letter code: UDP-2,3-diacylglucosamine hydrolase (240 aa).

Aspartate 8, histidine 10, aspartate 41, asparagine 79, and histidine 114 together coordinate Mn(2+). 79-80 (NR) contributes to the substrate binding site. Aspartate 122, serine 160, asparagine 164, lysine 167, and histidine 195 together coordinate substrate. Mn(2+) contacts are provided by histidine 195 and histidine 197.

It belongs to the LpxH family. It depends on Mn(2+) as a cofactor.

The protein localises to the cell inner membrane. It catalyses the reaction UDP-2-N,3-O-bis[(3R)-3-hydroxytetradecanoyl]-alpha-D-glucosamine + H2O = 2-N,3-O-bis[(3R)-3-hydroxytetradecanoyl]-alpha-D-glucosaminyl 1-phosphate + UMP + 2 H(+). Its pathway is glycolipid biosynthesis; lipid IV(A) biosynthesis; lipid IV(A) from (3R)-3-hydroxytetradecanoyl-[acyl-carrier-protein] and UDP-N-acetyl-alpha-D-glucosamine: step 4/6. Its function is as follows. Hydrolyzes the pyrophosphate bond of UDP-2,3-diacylglucosamine to yield 2,3-diacylglucosamine 1-phosphate (lipid X) and UMP by catalyzing the attack of water at the alpha-P atom. Involved in the biosynthesis of lipid A, a phosphorylated glycolipid that anchors the lipopolysaccharide to the outer membrane of the cell. The chain is UDP-2,3-diacylglucosamine hydrolase from Escherichia fergusonii (strain ATCC 35469 / DSM 13698 / CCUG 18766 / IAM 14443 / JCM 21226 / LMG 7866 / NBRC 102419 / NCTC 12128 / CDC 0568-73).